The sequence spans 475 residues: Aspartyl/glutamyl-tRNA(Asn/Gln) amidotransferase subunit B (475 aa).

It belongs to the GatB/GatE family. GatB subfamily. As to quaternary structure, heterotrimer of A, B and C subunits.

It catalyses the reaction L-glutamyl-tRNA(Gln) + L-glutamine + ATP + H2O = L-glutaminyl-tRNA(Gln) + L-glutamate + ADP + phosphate + H(+). It carries out the reaction L-aspartyl-tRNA(Asn) + L-glutamine + ATP + H2O = L-asparaginyl-tRNA(Asn) + L-glutamate + ADP + phosphate + 2 H(+). In terms of biological role, allows the formation of correctly charged Asn-tRNA(Asn) or Gln-tRNA(Gln) through the transamidation of misacylated Asp-tRNA(Asn) or Glu-tRNA(Gln) in organisms which lack either or both of asparaginyl-tRNA or glutaminyl-tRNA synthetases. The reaction takes place in the presence of glutamine and ATP through an activated phospho-Asp-tRNA(Asn) or phospho-Glu-tRNA(Gln). In Staphylococcus epidermidis (strain ATCC 12228 / FDA PCI 1200), this protein is Aspartyl/glutamyl-tRNA(Asn/Gln) amidotransferase subunit B.